Consider the following 525-residue polypeptide: D-aminopeptidase (525 aa).

Catalysis depends on serine 62, which acts as the Nucleophile. The active-site Proton donor/acceptor is the lysine 65. The important for specificity stretch occupies residues 485-495 (PRALDHTAPGD). Aspartate 489 is a substrate binding site.

The protein belongs to the peptidase S12 family. As to quaternary structure, homodimer.

It catalyses the reaction Release of an N-terminal D-amino acid from a peptide, Xaa-|-Yaa-, in which Xaa is preferably D-Ala, D-Ser or D-Thr. D-amino acid amides and methyl esters also are hydrolyzed, as is glycine amide.. With respect to regulation, inhibited by beta-lactam compounds such as 6-aminopenicillic acid, 7-aminocephalosporanic acid, benzylpenicillin and ampicillin. Inhibited by p-chloromercuribenzoate. In terms of biological role, hydrolyzes N-terminal residues in D-amino acid-containing peptides. This Gluconobacter oxydans (strain 621H) (Gluconobacter suboxydans) protein is D-aminopeptidase.